Reading from the N-terminus, the 203-residue chain is Probable GTP-binding protein EngB (203 aa).

The region spanning 21 to 196 (GAPEIAFLGR…WKKIFEAAGT (176 aa)) is the EngB-type G domain. Residues 29 to 36 (GRSNVGKS), 55 to 59 (GRTQT), 79 to 82 (DLPG), 146 to 149 (TKID), and 175 to 177 (FSA) each bind GTP. Residues Ser36 and Thr57 each coordinate Mg(2+).

It belongs to the TRAFAC class TrmE-Era-EngA-EngB-Septin-like GTPase superfamily. EngB GTPase family. It depends on Mg(2+) as a cofactor.

In terms of biological role, necessary for normal cell division and for the maintenance of normal septation. The chain is Probable GTP-binding protein EngB from Koribacter versatilis (strain Ellin345).